The following is an 83-amino-acid chain: Putative membrane protein insertion efficiency factor (83 aa).

The protein belongs to the UPF0161 family.

The protein localises to the cell membrane. In terms of biological role, could be involved in insertion of integral membrane proteins into the membrane. The polypeptide is Putative membrane protein insertion efficiency factor (Streptococcus thermophilus (strain ATCC BAA-250 / LMG 18311)).